A 527-amino-acid chain; its full sequence is Anthranilate synthase component 1 1 (527 aa).

Ser52 provides a ligand contact to L-tryptophan. Residues 53–72 (AEKTPASDPDGAFTPDTTTE) are disordered. 298 to 300 (PYM) lines the L-tryptophan pocket. 333 to 334 (GT) contacts chorismate. Residue Glu360 participates in Mg(2+) binding. Chorismate-binding positions include Tyr448, Arg468, 486–488 (GAG), and Gly488. Position 501 (Glu501) interacts with Mg(2+).

This sequence belongs to the anthranilate synthase component I family. In terms of assembly, tetramer of two components I and two components II. Mg(2+) serves as cofactor.

It carries out the reaction chorismate + L-glutamine = anthranilate + pyruvate + L-glutamate + H(+). Its pathway is amino-acid biosynthesis; L-tryptophan biosynthesis; L-tryptophan from chorismate: step 1/5. The sequence is that of Anthranilate synthase component 1 1 (trpE1) from Halobacterium salinarum (strain ATCC 700922 / JCM 11081 / NRC-1) (Halobacterium halobium).